The primary structure comprises 150 residues: C-type lectin 37Db (150 aa).

Positions 1-20 (MMVKLLLLFLVCWSALPLES) are cleaved as a signal peptide. The region spanning 31–148 (IGEKQYYISL…CYSSVAFICQ (118 aa)) is the C-type lectin domain. 2 disulfide bridges follow: Cys-52–Cys-147 and Cys-122–Cys-139. N-linked (GlcNAc...) asparagine glycans are attached at residues Asn-107 and Asn-115.

It localises to the secreted. In terms of biological role, galactose-specific lectin that displays calcium-dependent activity. Binds to the surface of hemocytes and enhances hemocyte encapsulation and melanization. This is likely by interacting with carbohydrates on the surface of the hemocytes. Also displays agglutination activity against the Gram-negative bacterium E.coli. The protein is C-type lectin 37Db of Drosophila melanogaster (Fruit fly).